We begin with the raw amino-acid sequence, 473 residues long: Photosystem II CP43 reaction center protein (473 aa).

Positions 1 to 14 (MKILYSLRRFYHVE) are excised as a propeptide. Threonine 15 bears the N-acetylthreonine mark. At threonine 15 the chain carries Phosphothreonine. 5 helical membrane-spanning segments follow: residues 69–93 (LFEV…PHLA), 134–155 (LLGP…QDRN), 178–200 (KALY…RKIT), 255–275 (KPFA…LSYS), and 291–312 (WFNN…ASQA). Residue glutamate 367 participates in [CaMn4O5] cluster binding. Residues 447–471 (RARAAAAGFEKGIDRDLEPVVYMTP) traverse the membrane as a helical segment.

The protein belongs to the PsbB/PsbC family. PsbC subfamily. In terms of assembly, PSII is composed of 1 copy each of membrane proteins PsbA, PsbB, PsbC, PsbD, PsbE, PsbF, PsbH, PsbI, PsbJ, PsbK, PsbL, PsbM, PsbT, PsbX, PsbY, PsbZ, Psb30/Ycf12, at least 3 peripheral proteins of the oxygen-evolving complex and a large number of cofactors. It forms dimeric complexes. It depends on Binds multiple chlorophylls and provides some of the ligands for the Ca-4Mn-5O cluster of the oxygen-evolving complex. It may also provide a ligand for a Cl- that is required for oxygen evolution. PSII binds additional chlorophylls, carotenoids and specific lipids. as a cofactor. Phosphorylated in both bundle sheath and mesophyll cells, phosphorylation increases when cells are grown under high rather than low light regimes (70 vs 900 umol photons/m-2/s).

The protein localises to the plastid. It localises to the chloroplast thylakoid membrane. Functionally, one of the components of the core complex of photosystem II (PSII). It binds chlorophyll and helps catalyze the primary light-induced photochemical processes of PSII. PSII is a light-driven water:plastoquinone oxidoreductase, using light energy to abstract electrons from H(2)O, generating O(2) and a proton gradient subsequently used for ATP formation. The polypeptide is Photosystem II CP43 reaction center protein (Zea mays (Maize)).